The sequence spans 155 residues: Ribosome maturation factor RimP (155 aa).

The protein belongs to the RimP family.

Its subcellular location is the cytoplasm. Required for maturation of 30S ribosomal subunits. In Prochlorococcus marinus (strain MIT 9211), this protein is Ribosome maturation factor RimP.